We begin with the raw amino-acid sequence, 260 residues long: MAVISMKQLLEAGVHFGHQTRRWNPKMKKYIFTERNGIYIIDLQKTVKKVDEAYNFLKQVSEDGGKVLFVGTKKQAQESIKNEAERAGQFYVNQRWLGGILTNYKTISKRVKRISEIEKMEEDGLFEVLPKKEVVEIKKEYDRLIKFLGGIRDMKSMPQALFVVDPRKERNAIAEARKLHIPIVGIVDTNCDPDEIDYVIPANDDAIRAVKLLTGKMADAVLEGQQGVSNEEVAAEQNIDLNEDEVVEVEEVKETSVESN.

This sequence belongs to the universal ribosomal protein uS2 family.

This is Small ribosomal subunit protein uS2 from Staphylococcus carnosus (strain TM300).